The sequence spans 218 residues: Ribose-5-phosphate isomerase A (218 aa).

Residues 28–31 (TGST), 81–84 (DGAD), and 94–97 (KGGG) each bind substrate. Residue Glu-103 is the Proton acceptor of the active site. Substrate is bound at residue Lys-121.

Belongs to the ribose 5-phosphate isomerase family. As to quaternary structure, homodimer.

The enzyme catalyses aldehydo-D-ribose 5-phosphate = D-ribulose 5-phosphate. It functions in the pathway carbohydrate degradation; pentose phosphate pathway; D-ribose 5-phosphate from D-ribulose 5-phosphate (non-oxidative stage): step 1/1. Catalyzes the reversible conversion of ribose-5-phosphate to ribulose 5-phosphate. This Proteus mirabilis (strain HI4320) protein is Ribose-5-phosphate isomerase A.